The sequence spans 345 residues: Putative mediator of RNA polymerase II transcription subunit 7 (345 aa).

Low complexity-rich tracts occupy residues 1–27 (MNTSQQQQQQQQQQQQQQQQQQQTPQQ) and 88–126 (NNNNNNNNNNNNNNNNNNNNNNNNNNNNNNNNNNNNNNN). Disordered regions lie at residues 1 to 130 (MNTS…KATT) and 292 to 315 (TPLPTNITSPTKNLMSPTKLNNSQ).

This sequence belongs to the Mediator complex subunit 7 family. As to quaternary structure, component of the Mediator complex.

The protein resides in the nucleus. Component of the Mediator complex, a coactivator involved in the regulated transcription of nearly all RNA polymerase II-dependent genes. Mediator functions as a bridge to convey information from gene-specific regulatory proteins to the basal RNA polymerase II transcription machinery. Mediator is recruited to promoters by direct interactions with regulatory proteins and serves as a scaffold for the assembly of a functional preinitiation complex with RNA polymerase II and the general transcription factors. This chain is Putative mediator of RNA polymerase II transcription subunit 7 (med7), found in Dictyostelium discoideum (Social amoeba).